We begin with the raw amino-acid sequence, 144 residues long: Probable 4-amino-4-deoxy-L-arabinose-phosphoundecaprenol flippase subunit ArnF (144 aa).

Residues 1–6 (MTHRRA) are Cytoplasmic-facing. Residues 7–24 (TLCAMASVALVSAAQLGM) traverse the membrane as a helical segment. Residues 25 to 56 (RWSMSRLPSPVQWLEMQEHAQLDLSALRVVCA) lie on the Periplasmic side of the membrane. The chain crosses the membrane as a helical span at residues 57–77 (SITAYALSMLFWLLALRVLPL). Residues 78–80 (SRA) lie on the Cytoplasmic side of the membrane. A helical membrane pass occupies residues 81–101 (YSLLSISYALVYTLAATLPFF). The Periplasmic segment spans residues 102-104 (HET). Residues 105 to 125 (FTVSKTVGVSLIVAGVLTINL) form a helical membrane-spanning segment. Over 126 to 144 (RRLPRPSPQDLSHENQRFR) the chain is Cytoplasmic.

This sequence belongs to the ArnF family. In terms of assembly, heterodimer of ArnE and ArnF.

It is found in the cell inner membrane. It functions in the pathway bacterial outer membrane biogenesis; lipopolysaccharide biosynthesis. Translocates 4-amino-4-deoxy-L-arabinose-phosphoundecaprenol (alpha-L-Ara4N-phosphoundecaprenol) from the cytoplasmic to the periplasmic side of the inner membrane. This chain is Probable 4-amino-4-deoxy-L-arabinose-phosphoundecaprenol flippase subunit ArnF, found in Pseudomonas syringae pv. syringae (strain B728a).